We begin with the raw amino-acid sequence, 374 residues long: Aminomethyltransferase (374 aa).

This sequence belongs to the GcvT family. In terms of assembly, the glycine cleavage system is composed of four proteins: P, T, L and H.

It catalyses the reaction N(6)-[(R)-S(8)-aminomethyldihydrolipoyl]-L-lysyl-[protein] + (6S)-5,6,7,8-tetrahydrofolate = N(6)-[(R)-dihydrolipoyl]-L-lysyl-[protein] + (6R)-5,10-methylene-5,6,7,8-tetrahydrofolate + NH4(+). Functionally, the glycine cleavage system catalyzes the degradation of glycine. The protein is Aminomethyltransferase of Edwardsiella ictaluri (strain 93-146).